Consider the following 332-residue polypeptide: Processive diacylglycerol alpha-glucosyltransferase (332 aa).

This sequence belongs to the glycosyltransferase group 1 family. Glycosyltransferase 4 subfamily. It depends on Mg(2+) as a cofactor.

The protein localises to the cell membrane. It carries out the reaction a 1,2-diacyl-sn-glycerol + UDP-alpha-D-glucose = a 1,2-diacyl-3-O-(alpha-D-glucopyranosyl)-sn-glycerol + UDP + H(+). It catalyses the reaction a 1,2-diacyl-3-O-(alpha-D-glucopyranosyl)-sn-glycerol + UDP-alpha-D-glucose = a 1,2-diacyl-3-O-[alpha-D-glucosyl-(1-&gt; 2)-alpha-D-glucosyl]-sn-glycerol + UDP + H(+). It participates in glycolipid metabolism; diglucosyl-diacylglycerol biosynthesis. Activated by the negatively charged lipids phosphatidylglycerol (PG), cardiolipin (CL), nonbilayer-prone 1,3-DAG, 1,2-dioleoylphosphatidylglycerol (DOPG) and 1,2-dioleoylphosphatidylserine (DOPS). Inhibited by 1,2-diacyl-3-O-(alpha-D-galactopyranosyl)-sn-glycerol, 1,2-diacyl-3-O-[6-O-acyl(alpha-D-glucopyranosyl)]-sn-glycerol and 1,2-diacyl-3-O-[alpha-D-glucopyranosyl-(1-&gt;2)-O-(6-O-acyl-alpha-D-glucopyranosyl)]-sn-glycerol. In terms of biological role, processive glucosyltransferase involved in the biosynthesis of both the non-bilayer-prone alpha-monoglucosyldiacylglycerol and the bilayer-forming membrane lipid alpha-diglucosyldiacylglycerol. These are major components for maintaining the anionic lipid surface charge density, for balancing the bilayer to non-bilayer phase equilibria and for keeping a constant lipid bilayer spontaneous curvature (curvature packing stress). Catalyzes the transfer of a glucosyl residue from UDP-Glc to diacylglycerol (DAG) acceptor to form the corresponding alpha-glucosyl-DAG (1,2-diacyl-3-O-(alpha-D-glucopyranosyl)-sn-glycerol), which then acts as acceptor to give alpha-diglucosyl-DAG product (3-O-(alpha-D-glucopyranosyl-alpha-(1-&gt;2)-D-glucopyranosyl)-1,2-diacyl-sn-glycerol). It can only use UDP-Glc as sugar donor. In Acholeplasma laidlawii, this protein is Processive diacylglycerol alpha-glucosyltransferase (dgs).